The sequence spans 545 residues: CTP synthase (545 aa).

An amidoligase domain region spans residues 1–266; it reads MTTNYIFVTG…DDYICKRFSL (266 aa). CTP is bound at residue Ser14. Residue Ser14 coordinates UTP. Residues 15-20 and Asp72 each bind ATP; that span reads SLGKGI. Mg(2+)-binding residues include Asp72 and Glu140. CTP is bound by residues 147–149, 187–192, and Lys223; these read DIE and KTKPTQ. Residues 187-192 and Lys223 each bind UTP; that span reads KTKPTQ. 239–241 is an ATP binding site; that stretch reads KDV. One can recognise a Glutamine amidotransferase type-1 domain in the interval 291–542; the sequence is NIGMVGKYVE…VKAASEYQKR (252 aa). Position 352 (Gly352) interacts with L-glutamine. The active-site Nucleophile; for glutamine hydrolysis is the Cys379. L-glutamine is bound by residues 380 to 383, Glu403, and Arg470; that span reads LGMQ. Active-site residues include His515 and Glu517.

This sequence belongs to the CTP synthase family. As to quaternary structure, homotetramer.

The enzyme catalyses UTP + L-glutamine + ATP + H2O = CTP + L-glutamate + ADP + phosphate + 2 H(+). The catalysed reaction is L-glutamine + H2O = L-glutamate + NH4(+). It carries out the reaction UTP + NH4(+) + ATP = CTP + ADP + phosphate + 2 H(+). The protein operates within pyrimidine metabolism; CTP biosynthesis via de novo pathway; CTP from UDP: step 2/2. Its activity is regulated as follows. Allosterically activated by GTP, when glutamine is the substrate; GTP has no effect on the reaction when ammonia is the substrate. The allosteric effector GTP functions by stabilizing the protein conformation that binds the tetrahedral intermediate(s) formed during glutamine hydrolysis. Inhibited by the product CTP, via allosteric rather than competitive inhibition. Functionally, catalyzes the ATP-dependent amination of UTP to CTP with either L-glutamine or ammonia as the source of nitrogen. Regulates intracellular CTP levels through interactions with the four ribonucleotide triphosphates. This Erwinia tasmaniensis (strain DSM 17950 / CFBP 7177 / CIP 109463 / NCPPB 4357 / Et1/99) protein is CTP synthase.